We begin with the raw amino-acid sequence, 419 residues long: Pregnancy-specific beta-1-glycoprotein 1 (419 aa).

The signal sequence occupies residues 1–34 (MGTLSAPPCTQRIKWKGLLLTASLLNFWNLPTTA). The region spanning 35–144 (QVTIEAEPTK…TGRFTFTLHL (110 aa)) is the Ig-like V-type domain. Residues Asn-61, Asn-104, Asn-111, Asn-199, Asn-259, Asn-268, and Asn-303 are each glycosylated (N-linked (GlcNAc...) asparagine). 3 Ig-like C2-type domains span residues 149–234 (PSIS…VTLN), 240–327 (PKPY…VTLN), and 335–410 (PRIY…KSMT). Cysteines 169 and 217 form a disulfide. Disulfide bonds link Cys-262–Cys-310 and Cys-354–Cys-394.

Belongs to the immunoglobulin superfamily. CEA family.

The protein localises to the secreted. The protein is Pregnancy-specific beta-1-glycoprotein 1 (PSG1) of Homo sapiens (Human).